Here is a 130-residue protein sequence, read N- to C-terminus: Large-conductance mechanosensitive channel (130 aa).

Transmembrane regions (helical) follow at residues 14 to 34 (IIDLAVAVVIGGAFGAIVTSF) and 73 to 93 (FVDFIIIAFSIFLAIKFLVKF).

This sequence belongs to the MscL family. In terms of assembly, homopentamer.

It is found in the cell membrane. Functionally, channel that opens in response to stretch forces in the membrane lipid bilayer. May participate in the regulation of osmotic pressure changes within the cell. The sequence is that of Large-conductance mechanosensitive channel from Oceanobacillus iheyensis (strain DSM 14371 / CIP 107618 / JCM 11309 / KCTC 3954 / HTE831).